Here is a 563-residue protein sequence, read N- to C-terminus: Eukaryotic translation initiation factor 3 subunit D (563 aa).

Residues 95 to 136 (PGYMRNRNRFNQRGGYRRDNRGGRFQGQGGNMGMQNLSRGRD) are disordered. Residues 294–308 (EFDLLTVGETANDLN) are RNA gate. Positions 528 to 563 (IPNSTFETDEEDDDDDEDDVENDDGDDEKDEGDGED) are disordered. A compositionally biased stretch (acidic residues) spans 534-563 (ETDEEDDDDDEDDVENDDGDDEKDEGDGED).

Belongs to the eIF-3 subunit D family. As to quaternary structure, component of the eukaryotic translation initiation factor 3 (eIF-3) complex.

The protein localises to the cytoplasm. In terms of biological role, mRNA cap-binding component of the eukaryotic translation initiation factor 3 (eIF-3) complex, which is involved in protein synthesis of a specialized repertoire of mRNAs and, together with other initiation factors, stimulates binding of mRNA and methionyl-tRNAi to the 40S ribosome. The eIF-3 complex specifically targets and initiates translation of a subset of mRNAs involved in cell proliferation. In the eIF-3 complex, eif3d specifically recognizes and binds the 7-methylguanosine cap of a subset of mRNAs. In Nematostella vectensis (Starlet sea anemone), this protein is Eukaryotic translation initiation factor 3 subunit D.